Reading from the N-terminus, the 206-residue chain is Smr domain-containing protein C11H11.03c (206 aa).

Residues 75–150 (IDLHGLYIDE…NEGRIYVYLP (76 aa)) form the Smr domain.

It localises to the cytoplasm. It is found in the nucleus. The chain is Smr domain-containing protein C11H11.03c from Schizosaccharomyces pombe (strain 972 / ATCC 24843) (Fission yeast).